Reading from the N-terminus, the 116-residue chain is NADPH-dependent 7-cyano-7-deazaguanine reductase (116 aa).

Cys31 serves as the catalytic Thioimide intermediate. The active-site Proton donor is the Asp38. Substrate-binding positions include 53-55 (IEL) and 72-73 (YE).

This sequence belongs to the GTP cyclohydrolase I family. QueF type 1 subfamily.

Its subcellular location is the cytoplasm. The enzyme catalyses 7-aminomethyl-7-carbaguanine + 2 NADP(+) = 7-cyano-7-deazaguanine + 2 NADPH + 3 H(+). The protein operates within tRNA modification; tRNA-queuosine biosynthesis. Its function is as follows. Catalyzes the NADPH-dependent reduction of 7-cyano-7-deazaguanine (preQ0) to 7-aminomethyl-7-deazaguanine (preQ1). This is NADPH-dependent 7-cyano-7-deazaguanine reductase from Chlorobium luteolum (strain DSM 273 / BCRC 81028 / 2530) (Pelodictyon luteolum).